The chain runs to 478 residues: Glycogen synthase (478 aa).

ADP-alpha-D-glucose is bound at residue Lys15.

It belongs to the glycosyltransferase 1 family. Bacterial/plant glycogen synthase subfamily.

The catalysed reaction is [(1-&gt;4)-alpha-D-glucosyl](n) + ADP-alpha-D-glucose = [(1-&gt;4)-alpha-D-glucosyl](n+1) + ADP + H(+). It participates in glycan biosynthesis; glycogen biosynthesis. Functionally, synthesizes alpha-1,4-glucan chains using ADP-glucose. The sequence is that of Glycogen synthase from Lactococcus lactis subsp. lactis (strain IL1403) (Streptococcus lactis).